A 251-amino-acid chain; its full sequence is Methionine aminopeptidase (251 aa).

Substrate is bound at residue histidine 76. Positions 93, 104, and 168 each coordinate a divalent metal cation. Residue histidine 175 coordinates substrate. Residues glutamate 202 and glutamate 233 each contribute to the a divalent metal cation site.

This sequence belongs to the peptidase M24A family. Methionine aminopeptidase type 1 subfamily. As to quaternary structure, monomer. It depends on Co(2+) as a cofactor. Requires Zn(2+) as cofactor. Mn(2+) is required as a cofactor. Fe(2+) serves as cofactor.

It catalyses the reaction Release of N-terminal amino acids, preferentially methionine, from peptides and arylamides.. Functionally, removes the N-terminal methionine from nascent proteins. The N-terminal methionine is often cleaved when the second residue in the primary sequence is small and uncharged (Met-Ala-, Cys, Gly, Pro, Ser, Thr, or Val). Requires deformylation of the N(alpha)-formylated initiator methionine before it can be hydrolyzed. In Staphylococcus epidermidis (strain ATCC 35984 / DSM 28319 / BCRC 17069 / CCUG 31568 / BM 3577 / RP62A), this protein is Methionine aminopeptidase.